Here is a 184-residue protein sequence, read N- to C-terminus: Inorganic pyrophosphatase (184 aa).

Substrate contacts are provided by Lys-19, Arg-33, and Tyr-45. 3 residues coordinate Mg(2+): Asp-55, Asp-60, and Asp-92. Position 129 (Tyr-129) interacts with substrate.

The protein belongs to the PPase family. In terms of assembly, homohexamer. Mg(2+) serves as cofactor.

The protein resides in the cytoplasm. It catalyses the reaction diphosphate + H2O = 2 phosphate + H(+). Functionally, catalyzes the hydrolysis of inorganic pyrophosphate (PPi) forming two phosphate ions. The polypeptide is Inorganic pyrophosphatase (Mycoplasma pneumoniae (strain ATCC 29342 / M129 / Subtype 1) (Mycoplasmoides pneumoniae)).